A 163-amino-acid polypeptide reads, in one-letter code: Sperm surface protein Sp17 (163 aa).

Disordered regions lie at residues 57–115 (PAEW…EKEE) and 129–163 (VAREEVKKMKTDSLQNEEKEENSEDTGFTSRTHEK). Basic and acidic residues-rich tracts occupy residues 62 to 98 (SKVEDRFYNNHAFEEQEPPEKSDPKQEESQVSGKEEE) and 129 to 139 (VAREEVKKMKT). Residues 114–143 (EEVAAVKIQAAFRGHVAREEVKKMKTDSLQ) enclose the IQ domain. The segment covering 153–163 (DTGFTSRTHEK) has biased composition (polar residues).

Homodimer. May interact with ROPN1. Testis- and sperm-specific.

Its subcellular location is the membrane. Sperm surface zona pellucida binding protein. Helps to bind spermatozoa to the zona pellucida with high affinity. Might function in binding zona pellucida and carbohydrates. This Papio hamadryas (Hamadryas baboon) protein is Sperm surface protein Sp17 (SPA17).